Reading from the N-terminus, the 141-residue chain is Galactose-6-phosphate isomerase subunit LacA (141 aa).

The protein belongs to the LacAB/RpiB family. As to quaternary structure, heteromultimeric protein consisting of LacA and LacB.

It carries out the reaction aldehydo-D-galactose 6-phosphate = keto-D-tagatose 6-phosphate. It functions in the pathway carbohydrate metabolism; D-galactose 6-phosphate degradation; D-tagatose 6-phosphate from D-galactose 6-phosphate: step 1/1. The sequence is that of Galactose-6-phosphate isomerase subunit LacA from Streptococcus pneumoniae (strain P1031).